Consider the following 94-residue polypeptide: Phosphoribosyl-ATP pyrophosphatase (94 aa).

Belongs to the PRA-PH family.

The protein resides in the cytoplasm. It carries out the reaction 1-(5-phospho-beta-D-ribosyl)-ATP + H2O = 1-(5-phospho-beta-D-ribosyl)-5'-AMP + diphosphate + H(+). The protein operates within amino-acid biosynthesis; L-histidine biosynthesis; L-histidine from 5-phospho-alpha-D-ribose 1-diphosphate: step 2/9. The protein is Phosphoribosyl-ATP pyrophosphatase of Pyrobaculum calidifontis (strain DSM 21063 / JCM 11548 / VA1).